Here is a 246-residue protein sequence, read N- to C-terminus: Probable transcriptional regulatory protein GK2594 (246 aa).

Belongs to the TACO1 family.

Its subcellular location is the cytoplasm. In Geobacillus kaustophilus (strain HTA426), this protein is Probable transcriptional regulatory protein GK2594.